The sequence spans 255 residues: Uridylate kinase (255 aa).

A disordered region spans residues 1-21 (MSAAAAGRGERLNHAGNPGHR). 30–33 (KLGG) lines the ATP pocket. Gly-71 serves as a coordination point for UMP. Positions 72 and 76 each coordinate ATP. Residues Asp-91 and 152-159 (MGLPYFST) contribute to the UMP site. Residues Phe-185 and Asp-188 each contribute to the ATP site.

This sequence belongs to the UMP kinase family. As to quaternary structure, homohexamer.

Its subcellular location is the cytoplasm. It catalyses the reaction UMP + ATP = UDP + ADP. It participates in pyrimidine metabolism; CTP biosynthesis via de novo pathway; UDP from UMP (UMPK route): step 1/1. Inhibited by UTP. In terms of biological role, catalyzes the reversible phosphorylation of UMP to UDP. The chain is Uridylate kinase from Mycobacterium leprae (strain TN).